The sequence spans 1324 residues: Mediator of RNA polymerase II transcription subunit 13 (1324 aa).

Disordered regions lie at residues 296–346, 386–455, 535–590, 607–631, 694–816, and 1151–1198; these read ESGV…PPEA, FFDD…ATTA, GRFF…EPEI, HDDK…SNNS, KGGQ…VPSA, and TGSD…PDIY. Residues 298 to 331 are compositionally biased toward polar residues; it reads GVNTNESTAAQPQPAQNGTNSMAPAAGTTNATTQ. The span at 398–407 shows a compositional bias: acidic residues; the sequence is DGDNDNGNDN. A compositionally biased stretch (basic and acidic residues) spans 408 to 442; that stretch reads DNDKADAMDVDVKEEAKKEEMIKKETKEEVPVKEE. Residues 546 to 566 are compositionally biased toward low complexity; it reads DNEGSSDNTGDSSDSGDGSES. Basic and acidic residues-rich tracts occupy residues 567–578 and 607–617; these read VPRDVKRQKVDE and HDDKPAKKIDS. 2 stretches are compositionally biased toward low complexity: residues 618–631 and 724–743; these read SNDT…SNNS and SNAS…QMGA. A compositionally biased stretch (polar residues) spans 750–784; sequence LSPSRGATPQPEGSSPETRPSNWTPGITSQVNSAA. 2 stretches are compositionally biased toward low complexity: residues 785 to 816 and 1172 to 1184; these read SSPV…VPSA and TGAA…GSAP.

Belongs to the Mediator complex subunit 13 family. As to quaternary structure, component of the SRB8-11 complex, which itself associates with the Mediator complex.

The protein localises to the nucleus. Its function is as follows. Component of the SRB8-11 complex. The SRB8-11 complex is a regulatory module of the Mediator complex which is itself involved in regulation of basal and activated RNA polymerase II-dependent transcription. The SRB8-11 complex may be involved in the transcriptional repression of a subset of genes regulated by Mediator. It may inhibit the association of the Mediator complex with RNA polymerase II to form the holoenzyme complex. The sequence is that of Mediator of RNA polymerase II transcription subunit 13 (SSN2) from Yarrowia lipolytica (strain CLIB 122 / E 150) (Yeast).